Reading from the N-terminus, the 586-residue chain is Pescadillo homolog (586 aa).

The tract at residues 1–54 is required for 28S ribosomal RNA processing; the sequence is MGGLEKKKYERGSATNYITRNKARKKLQLSLPDFRRLCILKGIYPHEPKHKKKV. The tract at residues 1–257 is sufficient for nucleolar localization; the sequence is MGGLEKKKYE…PKIESQAQAE (257 aa). Residue K98 is modified to N6-acetyllysine. Positions 305-414 are sufficient for interaction with MAP1B; that stretch reads VTAQEEDRRK…LLLPVAEYFP (110 aa). In terms of domain architecture, BRCT spans 321–414; sequence KHKKLFEGLK…LLLPVAEYFP (94 aa). Residues 447–508 form a disordered region; the sequence is GEDPGNLEEE…QQRLGGKKPQ (62 aa). Residues 451–491 are compositionally biased toward acidic residues; it reads GNLEEEEEDEDDEGDDSEGDGDVAVENEEEVVEAESEEEEE. K515 is covalently cross-linked (Glycyl lysine isopeptide (Lys-Gly) (interchain with G-Cter in SUMO1); alternate). A Glycyl lysine isopeptide (Lys-Gly) (interchain with G-Cter in SUMO2); alternate cross-link involves residue K515. A required for 28S ribosomal RNA processing region spans residues 537-586; the sequence is MMKKREKYLYQKIMFGKRRKIREANKLAEKRKAHDDAVRSEKKAKRTRPV. Over residues 562 to 577 the composition is skewed to basic and acidic residues; it reads KLAEKRKAHDDAVRSE. The segment at 562 to 586 is disordered; the sequence is KLAEKRKAHDDAVRSEKKAKRTRPV.

It belongs to the pescadillo family. Component of the PeBoW complex, composed of BOP1, PES1 and WDR12. The complex is held together by BOP1, which interacts with PES1 via its N-terminal domain and with WDR12 via a high-affinity interaction between the seven-bladed beta-propeller domains of the 2 proteins. The PeBoW complex associates with the 66S pre-ribosome. The PeBoW complex also associates with DDX27, PES1 interacts directly with DDX27. Interacts with IRS1 and UBTF. May interact with MAP1B. Post-translationally, sumoylated.

Its subcellular location is the nucleus. It localises to the nucleolus. The protein localises to the nucleoplasm. The protein resides in the chromosome. Component of the PeBoW complex, which is required for maturation of 28S and 5.8S ribosomal RNAs and formation of the 60S ribosome. This is Pescadillo homolog (Pes1) from Rattus norvegicus (Rat).